Consider the following 606-residue polypeptide: Serine/threonine-protein kinase A-Raf (606 aa).

Positions 19 to 91 (GTVKVYLPNK…DGEELIVEVL (73 aa)) constitute an RBD domain. Residues 98 to 144 (MHNFVRKTFFSLAFCDFCLKFLFHGFRCQTCGYKFHQHCSSKVPTVC) form a Phorbol-ester/DAG-type zinc finger. The Zn(2+) site is built by His99, Cys112, Cys115, Cys125, Cys128, His133, Cys136, and Cys144. Residues Ser157 and Ser162 each carry the phosphoserine modification. Disordered regions lie at residues 158-207 (VQDL…NAPL) and 241-290 (TDAA…DKKK). A Phosphothreonine modification is found at Thr181. 3 positions are modified to phosphoserine: Ser186, Ser257, and Ser269. Positions 254–267 (PRGSPSPASVSSGR) are enriched in low complexity. Over residues 274 to 289 (SPSEQRERKSLADDKK) the composition is skewed to basic and acidic residues. In terms of domain architecture, Protein kinase spans 310-570 (VQLLKRIGTG…PQILATIELL (261 aa)). ATP contacts are provided by residues 316-324 (IGTGSFGTV) and Lys336. Thr318 bears the Phosphothreonine mark. The active-site Proton acceptor is the Asp429.

It belongs to the protein kinase superfamily. TKL Ser/Thr protein kinase family. RAF subfamily. Interacts with TH1L/NELFD. Zn(2+) serves as cofactor. In terms of processing, dephosphorylation by the SHOC2-MRAS-PP1c (SMP) complex consisting of SHOC2, GTP-bound M-Ras/MRAS and the catalytic subunit of protein phosphatase 1 (PPP1CA, PPP1CB or PPP1CC); this relieves inactivation and stimulates kinase activity.

It catalyses the reaction L-seryl-[protein] + ATP = O-phospho-L-seryl-[protein] + ADP + H(+). It carries out the reaction L-threonyl-[protein] + ATP = O-phospho-L-threonyl-[protein] + ADP + H(+). In terms of biological role, involved in the transduction of mitogenic signals from the cell membrane to the nucleus. May also regulate the TOR signaling cascade. Phosphorylates PFKFB2. This Sus scrofa (Pig) protein is Serine/threonine-protein kinase A-Raf (ARAF).